Here is a 2237-residue protein sequence, read N- to C-terminus: Zinc finger protein 318 (2237 aa).

2 stretches are compositionally biased toward low complexity: residues 1–12 (MYRSGSRSSVSS) and 30–39 (GASSGPTRRP). Positions 1-221 (MYRSGSRSSV…DMDRDDLTDD (221 aa)) are disordered. Positions 1-1114 (MYRSGSRSSV…THMHNKKHTQ (1114 aa)) are interaction with AR. Residue serine 40 is modified to Phosphoserine. Positions 53 to 66 (PARRHRSPSGHRGR) are enriched in basic residues. Phosphoserine is present on residues serine 69, serine 109, and serine 111. Residues 140 to 156 (IRGESRADFARDGRGDH) show a composition bias toward basic and acidic residues. Residues serine 167 and serine 205 each carry the phosphoserine modification. At tyrosine 237 the chain carries Phosphotyrosine. Residues serine 239 and serine 246 each carry the phosphoserine modification. The segment at 263 to 350 (LHRPEFSPQS…SPRFLDPEFR (88 aa)) is disordered. Composition is skewed to basic and acidic residues over residues 274 to 290 (CHDELLRGTERNRDKLK) and 297 to 317 (RSEERSREAKRPRYDDTEKVH). A compositionally biased stretch (polar residues) spans 321–332 (GDHSSFTSGTRN). Positions 348–376 (EFRELDLARRKREEEEEQSRSLSQELVGV) form a coiled coil. 4 positions are modified to phosphoserine: serine 497, serine 502, serine 531, and serine 557. Disordered regions lie at residues 551-612 (QEKR…ESLE) and 645-732 (QERL…TKNS). Residues 560-576 (DIEDEEKFLYGDEEEDI) are compositionally biased toward acidic residues. Residues lysine 577, lysine 583, lysine 596, and lysine 607 each participate in a glycyl lysine isopeptide (Lys-Gly) (interchain with G-Cter in SUMO2) cross-link. Residues 577 to 586 (KSESPLKSLE) show a composition bias toward basic and acidic residues. Residues 592-602 (GTRQKANSLPS) are compositionally biased toward polar residues. Composition is skewed to basic and acidic residues over residues 658-677 (SADRRLSADRHLSGDRHFSA) and 692-706 (RSSDPHRPESRETHH). Residue threonine 865 is modified to Phosphothreonine. A coiled-coil region spans residues 904-1003 (EKNRASQKQK…SELDKVAQIL (100 aa)). 3 stretches are compositionally biased toward basic and acidic residues: residues 945–964 (QQGEMLRKKRREKDGHKDPL), 1013–1037 (KSSNDSKESTEKPEKEKSKSPEKEL), and 1047–1056 (KESKMNEKSC). Disordered stretches follow at residues 945 to 966 (QQGEMLRKKRREKDGHKDPLLM) and 1013 to 1072 (KSSN…TVKQ). Position 1032 is a phosphoserine (serine 1032). Over residues 1058 to 1072 (KSPSSTESLQPTVKQ) the composition is skewed to polar residues. At serine 1059 the chain carries Phosphoserine. 2 Matrin-type zinc fingers span residues 1085–1119 (AGSHWCKDCNTTCGTMFDFFTHMHNKKHTQTLDPY) and 1158–1180 (FYCQLCEEFLGDPISGEQHVKGH). 3 disordered regions span residues 1245–1289 (VKED…KKEP), 1302–1342 (SWKK…VGKA), and 1366–1395 (TTSTQTKIRPNLPIPSTVLRKSGSATVSKP). Basic and acidic residues-rich tracts occupy residues 1280 to 1289 (QVKEEVKKEP), 1304 to 1313 (KKPEKEEEKG), and 1321 to 1341 (PKEDTVETSKDRDDGKAEVGK). Serine 1445 carries the post-translational modification Phosphoserine. Disordered regions lie at residues 1449–1497 (KVEL…LSAP), 1614–1651 (HETKLSSSTLANGESSSLPRTESSDFSSTCTLNSSMSS), 1727–1770 (TSGS…HCQT), and 1790–1867 (EVYQ…MTGH). A compositionally biased stretch (pro residues) spans 1469–1490 (LPPPPPPPPPPPPPPPPPPPQA). A compositionally biased stretch (polar residues) spans 1618–1639 (LSSSTLANGESSSLPRTESSDF). The span at 1640–1651 (SSTCTLNSSMSS) shows a compositional bias: low complexity. Over residues 1734–1749 (DTHKDRPPEGKIRFDL) the composition is skewed to basic and acidic residues. Residues 1757–1770 (TDSTSHLSDTHCQT) show a composition bias toward polar residues. A compositionally biased stretch (basic and acidic residues) spans 1796–1814 (GCRESEMKRKTELKGKVAT). Residues 1798-1827 (RESEMKRKTELKGKVATEEEEEEEEEGANS) adopt a coiled-coil conformation. Residues 1815–1824 (EEEEEEEEEG) show a composition bias toward acidic residues. Polar residues predominate over residues 1828 to 1840 (IEDSNSNHGNRNT). Serine 1878, serine 1908, serine 1988, serine 2044, serine 2054, serine 2140, serine 2143, serine 2194, and serine 2206 each carry phosphoserine. The tract at residues 2039-2064 (EGAHSSSNSRNGRITSNSLETGHPVE) is disordered. Polar residues predominate over residues 2041–2058 (AHSSSNSRNGRITSNSLE). Positions 2178 to 2237 (EDNDSALNLVKTPPSGSPSRDQVVGGNVSPREMPEQEAAVDVIPDHTRSNVYNSQDYLNG) are disordered. The segment covering 2226 to 2237 (SNVYNSQDYLNG) has biased composition (polar residues).

As to quaternary structure, homodimer. Heterodimer of isoform 1 and isoform 2. Isoform 1 and isoform 2 interact with AR. Isoform 1 and isoform 2 are highly expressed in testis, moderately expressed in adrenal gland and uterus and faintly expressed in brain, kidney and liver. Isoform 1 is expressed more in adrenal gland, uterus and liver than isoform 2 is. Expression during testicular development of isoform 1 and isoform 2 is restricted to spermatocytes at the pachytene stage of meiotic prophase and to round and elongated spermatids.

The protein localises to the nucleus. Functionally, acts as a transcriptional corepressor for AR-mediated transactivation function. May act as a transcriptional regulator during spermatogenesis and in particular, during meiotic division. Its function is as follows. Acts as a transcriptional coactivator for AR-mediated transactivation function. May act as a transcriptional regulator during spermatogenesis and in particular, during meiotic division. The chain is Zinc finger protein 318 (Znf318) from Mus musculus (Mouse).